Reading from the N-terminus, the 512-residue chain is Bifunctional purine biosynthesis protein PurH (512 aa).

In terms of domain architecture, MGS-like spans Met1–Val144.

It belongs to the PurH family.

It carries out the reaction (6R)-10-formyltetrahydrofolate + 5-amino-1-(5-phospho-beta-D-ribosyl)imidazole-4-carboxamide = 5-formamido-1-(5-phospho-D-ribosyl)imidazole-4-carboxamide + (6S)-5,6,7,8-tetrahydrofolate. The catalysed reaction is IMP + H2O = 5-formamido-1-(5-phospho-D-ribosyl)imidazole-4-carboxamide. The protein operates within purine metabolism; IMP biosynthesis via de novo pathway; 5-formamido-1-(5-phospho-D-ribosyl)imidazole-4-carboxamide from 5-amino-1-(5-phospho-D-ribosyl)imidazole-4-carboxamide (10-formyl THF route): step 1/1. Its pathway is purine metabolism; IMP biosynthesis via de novo pathway; IMP from 5-formamido-1-(5-phospho-D-ribosyl)imidazole-4-carboxamide: step 1/1. This chain is Bifunctional purine biosynthesis protein PurH, found in Limosilactobacillus reuteri (strain DSM 20016) (Lactobacillus reuteri).